Reading from the N-terminus, the 387-residue chain is Succinate--CoA ligase [ADP-forming] subunit beta (387 aa).

Residues 9 to 236 (KELFAKHNVP…KDATDPLELK (228 aa)) form the ATP-grasp domain. ATP is bound by residues K45, 52–54 (GRG), S94, and E99. Mg(2+) contacts are provided by N191 and D205. Residues N256 and 318–320 (GIT) each bind substrate.

The protein belongs to the succinate/malate CoA ligase beta subunit family. As to quaternary structure, heterotetramer of two alpha and two beta subunits. The cofactor is Mg(2+).

The enzyme catalyses succinate + ATP + CoA = succinyl-CoA + ADP + phosphate. It catalyses the reaction GTP + succinate + CoA = succinyl-CoA + GDP + phosphate. It functions in the pathway carbohydrate metabolism; tricarboxylic acid cycle; succinate from succinyl-CoA (ligase route): step 1/1. Functionally, succinyl-CoA synthetase functions in the citric acid cycle (TCA), coupling the hydrolysis of succinyl-CoA to the synthesis of either ATP or GTP and thus represents the only step of substrate-level phosphorylation in the TCA. The beta subunit provides nucleotide specificity of the enzyme and binds the substrate succinate, while the binding sites for coenzyme A and phosphate are found in the alpha subunit. The polypeptide is Succinate--CoA ligase [ADP-forming] subunit beta (Mycolicibacterium vanbaalenii (strain DSM 7251 / JCM 13017 / BCRC 16820 / KCTC 9966 / NRRL B-24157 / PYR-1) (Mycobacterium vanbaalenii)).